Consider the following 543-residue polypeptide: Neurofilament light polypeptide (543 aa).

S2 is subject to N-acetylserine. Residues 2–92 (SSFSYEPYYS…LKSIRTQEKA (91 aa)) are head. O-linked (GlcNAc) threonine glycosylation occurs at T21. Asymmetric dimethylarginine; alternate is present on R23. R23 is subject to Omega-N-methylarginine; alternate. A glycan (O-linked (GlcNAc) serine) is linked at S27. R30 is subject to Omega-N-methylarginine. Y43 carries the phosphotyrosine modification. Phosphoserine occurs at positions 56, 67, and 103. One can recognise an IF rod domain in the interval 90 to 400 (EKAQLQDLND…KLLEGEETRL (311 aa)). The coil 1A stretch occupies residues 93 to 124 (QLQDLNDRFASFIERVHELEQQNKVLEAELLV). Residues 125 to 137 (LRQKHSEPSRFRA) form a linker 1 region. The coil 1B stretch occupies residues 138 to 234 (LYEQEIRDLR…KVHEEEIAEL (97 aa)). Positions 235–252 (QAQIQYAQISVEMDVTKP) are linker 12. Residues 253–271 (DLSAALKDIRAQYEKLAAK) are coil 2A. The interval 272 to 280 (NMQNAEEWF) is linker 2. The interval 281–396 (KSRFTVLTES…AAYRKLLEGE (116 aa)) is coil 2B. The tract at residues 381–391 (ALDIEIAAYRK) is epitope; recognized by IF-specific monoclonal antibody. Residues 397–443 (ETRLSFTSVGSITSGYSQSSQVFGRSAYGGLQTSSYLMSTRSFPSYY) form a tail, subdomain A region. A tail region spans residues 397-543 (ETRLSFTSVG…GEEQAAKKKD (147 aa)). The segment at 444-543 (TSHVQEEQIE…GEEQAAKKKD (100 aa)) is tail, subdomain B (acidic). Positions 462-543 (KAEEAKDEPP…GEEQAAKKKD (82 aa)) are disordered. The span at 471–525 (PSEGEAEEEEKDKEEAEEEEAAEEEEAAKEESEEAKEEEEGGEGEEGEETKEAEE) shows a compositional bias: acidic residues. Phosphoserine occurs at positions 472 and 502. Position 520 is a phosphothreonine (T520). Positions 526–543 (EEKKVEGAGEEQAAKKKD) are enriched in basic and acidic residues.

Belongs to the intermediate filament family. Forms homodimers (in vitro). Forms heterodimers with NEFH or NEFM; which can further hetero-oligomerize (in vitro). Forms heterodimers with INA (in vitro). Interacts with ARHGEF28. Interacts with TRIM2. In terms of processing, O-glycosylated. Phosphorylated in the head and rod regions by the PKC kinase PKN1, leading to the inhibition of polymerization. Post-translationally, ubiquitinated in the presence of TRIM2 and UBE2D1.

Its subcellular location is the cell projection. It localises to the axon. The protein localises to the cytoplasm. It is found in the cytoskeleton. In terms of biological role, neurofilaments usually contain three intermediate filament proteins: NEFL, NEFM, and NEFH which are involved in the maintenance of neuronal caliber. May additionally cooperate with the neuronal intermediate filament proteins PRPH and INA to form neuronal filamentous networks. This is Neurofilament light polypeptide (NEFL) from Homo sapiens (Human).